A 127-amino-acid chain; its full sequence is Ycf91-like protein (127 aa).

Belongs to the ycf91 family.

The chain is Ycf91-like protein from Nostoc sp. (strain PCC 7120 / SAG 25.82 / UTEX 2576).